Here is a 621-residue protein sequence, read N- to C-terminus: Intermediate filament protein ifc-2 (621 aa).

The tract at residues 20–55 (SGAYTSGFGGLVSGMSSAGAICTTQIRDAREREKRE) is head. The IF rod domain occupies 52–400 (EKREIGLLND…VLLNGANVTT (349 aa)). The tract at residues 56-87 (IGLLNDRLADYIEKVRFLEAQNQCLSHDIDIL) is coil 1A. Positions 88 to 100 (RRGFSGGGHVSGL) are linker 1. A coil 1B region spans residues 101 to 238 (YDTEIAQAKR…TENSTRIEQE (138 aa)). The segment at 239 to 256 (LVFIRRDTTAENRDYFRH) is linker 12. The coil 2 stretch occupies residues 257 to 400 (ELQAAIRDIR…VLLNGANVTT (144 aa)). Residues 401–549 (YVSNTHPSGV…RVDVGGFRVE (149 aa)) are tail. Residues 508–621 (SGRSFHSWYL…EERAWFVYLN (114 aa)) enclose the LTD domain.

It belongs to the intermediate filament family.

The protein resides in the cytoplasm. Functionally, cytoplasmic intermediate filaments provide mechanical strength to cells. This chain is Intermediate filament protein ifc-2, found in Caenorhabditis briggsae.